The chain runs to 241 residues: 3-dehydroquinate dehydratase (241 aa).

3-dehydroquinate is bound by residues 35-37 (ELR) and R70. The active-site Proton donor/acceptor is the H133. Residue K160 is the Schiff-base intermediate with substrate of the active site. 3-dehydroquinate contacts are provided by R202 and Q225.

The protein belongs to the type-I 3-dehydroquinase family. Homodimer.

It catalyses the reaction 3-dehydroquinate = 3-dehydroshikimate + H2O. It functions in the pathway metabolic intermediate biosynthesis; chorismate biosynthesis; chorismate from D-erythrose 4-phosphate and phosphoenolpyruvate: step 3/7. Its function is as follows. Involved in the third step of the chorismate pathway, which leads to the biosynthesis of aromatic amino acids. Catalyzes the cis-dehydration of 3-dehydroquinate (DHQ) and introduces the first double bond of the aromatic ring to yield 3-dehydroshikimate. The chain is 3-dehydroquinate dehydratase from Staphylococcus haemolyticus (strain JCSC1435).